The chain runs to 142 residues: Transcription antitermination protein NusB (142 aa).

The protein belongs to the NusB family.

Its function is as follows. Involved in transcription antitermination. Required for transcription of ribosomal RNA (rRNA) genes. Binds specifically to the boxA antiterminator sequence of the ribosomal RNA (rrn) operons. The protein is Transcription antitermination protein NusB of Streptomyces coelicolor (strain ATCC BAA-471 / A3(2) / M145).